We begin with the raw amino-acid sequence, 72 residues long: Hypotensin-1 (72 aa).

The N-terminal stretch at 1–24 (MKMMIPVIFSILLLIFSLSSTAMS) is a signal peptide. Residues 25–35 (LEDEQENMEER) constitute a propeptide that is removed on maturation. Ser41 carries the post-translational modification Phosphoserine. The disordered stretch occupies residues 53 to 72 (ETNAKPPARFDPAAFEKSDD). A propeptide spanning residues 61–72 (RFDPAAFEKSDD) is cleaved from the precursor.

Belongs to the non-disulfide-bridged peptide (NDBP) superfamily. Undergoes enzymatic cleavages by carboxypeptidases, endopeptidases, and aminopeptidases resulting in at least 46 fragments of this protein. In terms of tissue distribution, expressed by the venom gland.

Its subcellular location is the secreted. Agonist of the B2 bradykinin receptor (BDKRB2). Potentiates the hypotensive effect of bradykinin (BK) and induces a direct vasorelaxing effect independent of BK, by endothelium- and nitric oxide (NO)-dependent mechanisms in rat aortic ring preparations. Also exerts proangiogenic, antiinflammatory, and antifibrogenic activities. Does not inhibit the angiotensin-converting enzyme (ACE) but increases its activity, and inhibits neprilysin (NEP) in a non-competitive manner. Exerts intermediate cytotoxicity and pro-inflammatory effects on mouse macrophages, and increases the phagocytic activity of these murine cells. Its function is as follows. Presents moderate hemolytic activity at physiological concentrations (micromolar range). Does not induce mast cell degranulation, lactate dehydrogenase (LDH) release from mast cells and antimicrobial effects. In vivo, causes intense pain (but no edema formation), when injected in mice hind paws. Also induces discomfort and anxiety in mice, as it moderately diminishes locomotion and moderately increases rearing behavior. In Tityus serrulatus (Brazilian scorpion), this protein is Hypotensin-1.